The sequence spans 198 residues: HTH-type transcriptional regulator BetI (198 aa).

The HTH tetR-type domain occupies 8–68; the sequence is PLRRRELIDA…ATMRHLLREL (61 aa). Residues 31–50 constitute a DNA-binding region (H-T-H motif); the sequence is TVAQIAHEAGVSPALAHHYF.

Its pathway is amine and polyamine biosynthesis; betaine biosynthesis via choline pathway [regulation]. In terms of biological role, repressor involved in the biosynthesis of the osmoprotectant glycine betaine. It represses transcription of the choline transporter BetT and the genes of BetAB involved in the synthesis of glycine betaine. This Brucella suis biovar 1 (strain 1330) protein is HTH-type transcriptional regulator BetI.